The chain runs to 73 residues: Translation initiation factor IF-1 (73 aa).

In terms of domain architecture, S1-like spans 1-73 (MAKKDGAIEV…SRGRIVYRYK (73 aa)).

Belongs to the IF-1 family. In terms of assembly, component of the 30S ribosomal translation pre-initiation complex which assembles on the 30S ribosome in the order IF-2 and IF-3, IF-1 and N-formylmethionyl-tRNA(fMet); mRNA recruitment can occur at any time during PIC assembly.

It is found in the cytoplasm. Its function is as follows. One of the essential components for the initiation of protein synthesis. Stabilizes the binding of IF-2 and IF-3 on the 30S subunit to which N-formylmethionyl-tRNA(fMet) subsequently binds. Helps modulate mRNA selection, yielding the 30S pre-initiation complex (PIC). Upon addition of the 50S ribosomal subunit IF-1, IF-2 and IF-3 are released leaving the mature 70S translation initiation complex. The chain is Translation initiation factor IF-1 from Mycobacterium avium (strain 104).